The primary structure comprises 917 residues: Alanine--tRNA ligase (917 aa).

Zn(2+) contacts are provided by H615, H619, C719, and H723.

Belongs to the class-II aminoacyl-tRNA synthetase family. The cofactor is Zn(2+).

It is found in the cytoplasm. The enzyme catalyses tRNA(Ala) + L-alanine + ATP = L-alanyl-tRNA(Ala) + AMP + diphosphate. In terms of biological role, catalyzes the attachment of alanine to tRNA(Ala) in a two-step reaction: alanine is first activated by ATP to form Ala-AMP and then transferred to the acceptor end of tRNA(Ala). Also edits incorrectly charged Ser-tRNA(Ala) and Gly-tRNA(Ala) via its editing domain. The protein is Alanine--tRNA ligase of Thermococcus kodakarensis (strain ATCC BAA-918 / JCM 12380 / KOD1) (Pyrococcus kodakaraensis (strain KOD1)).